A 270-amino-acid polypeptide reads, in one-letter code: MSRLEQRFAQLKTEGRAALVTFITAGDPGYDTSLQVLKGLPAAGADVIELGMPFTDPMADGVAIQLATLRALDAGQTLQKTLQMVSEFRVDDQTTPIVLMGYYNPIHRFGVEAFVAQAKEAGVDGLIIVDLPPEHDAELATPAQASGIDFIRLTTPTTDDARLPRVLERSSGFVYYVSVAGVTGAGSATTEHVTEAIARLRRHTSLPISVGFGIRTPEQAAAIARLADGVVVGSAFVDKIATAESPEKAIDGVLTLCAALAEGVRNARIG.

Residues glutamate 49 and aspartate 60 each act as proton acceptor in the active site.

It belongs to the TrpA family. As to quaternary structure, tetramer of two alpha and two beta chains.

It carries out the reaction (1S,2R)-1-C-(indol-3-yl)glycerol 3-phosphate + L-serine = D-glyceraldehyde 3-phosphate + L-tryptophan + H2O. Its pathway is amino-acid biosynthesis; L-tryptophan biosynthesis; L-tryptophan from chorismate: step 5/5. In terms of biological role, the alpha subunit is responsible for the aldol cleavage of indoleglycerol phosphate to indole and glyceraldehyde 3-phosphate. This Pseudomonas savastanoi pv. phaseolicola (strain 1448A / Race 6) (Pseudomonas syringae pv. phaseolicola (strain 1448A / Race 6)) protein is Tryptophan synthase alpha chain.